The primary structure comprises 167 residues: SsrA-binding protein (167 aa).

The segment covering 139-158 has biased composition (basic and acidic residues); the sequence is QNHDKRDAAKERDWQRDKQR. A disordered region spans residues 139 to 167; it reads QNHDKRDAAKERDWQRDKQRVMRRHNRDA.

This sequence belongs to the SmpB family.

Its subcellular location is the cytoplasm. In terms of biological role, required for rescue of stalled ribosomes mediated by trans-translation. Binds to transfer-messenger RNA (tmRNA), required for stable association of tmRNA with ribosomes. tmRNA and SmpB together mimic tRNA shape, replacing the anticodon stem-loop with SmpB. tmRNA is encoded by the ssrA gene; the 2 termini fold to resemble tRNA(Ala) and it encodes a 'tag peptide', a short internal open reading frame. During trans-translation Ala-aminoacylated tmRNA acts like a tRNA, entering the A-site of stalled ribosomes, displacing the stalled mRNA. The ribosome then switches to translate the ORF on the tmRNA; the nascent peptide is terminated with the 'tag peptide' encoded by the tmRNA and targeted for degradation. The ribosome is freed to recommence translation, which seems to be the essential function of trans-translation. The sequence is that of SsrA-binding protein from Xanthomonas oryzae pv. oryzae (strain MAFF 311018).